The sequence spans 185 residues: Sarcoplasmic calcium-binding proteins I, III, and IV (185 aa).

4 EF-hand domains span residues 5–41, 57–92, 102–137, and 138–173; these read FQKQKIKFTFDFFLDYNKDGSIQWEDFEEMIKRYKEV, SLEDEWRDLKGRADINKDDVVSWEEYLAMWEKTIAT, WCQNRIPFLFKGMDVSGDGIVDLEEFQNYCKNFQLQ, and CADVPAVYNVITDGGKVTFDLNRYKELYYRLLTSPA. Residues aspartate 19, asparagine 21, aspartate 23, serine 25, aspartate 30, aspartate 70, asparagine 72, aspartate 74, glutamate 81, aspartate 115, serine 117, aspartate 119, and glutamate 126 each coordinate Ca(2+).

Like parvalbumins, SCPs seem to be more abundant in fast contracting muscles, but no functional relationship can be established from this distribution. This chain is Sarcoplasmic calcium-binding proteins I, III, and IV, found in Branchiostoma lanceolatum (Common lancelet).